Here is a 491-residue protein sequence, read N- to C-terminus: Serine/threonine-protein phosphatase 2A regulatory subunit B'' subunit delta (491 aa).

Residues 331–366 (TTPTSTEYWFRCMDLDGDGALSMFELEFFYEEQAQR) form the EF-hand domain. Ca(2+) contacts are provided by D344, D346, D348, and E355. Acidic residues-rich tracts occupy residues 460-473 (AMAEDDDDHDEGSD) and 481-491 (ADEDCDDLEPL). Positions 460-491 (AMAEDDDDHDEGSDPIDLYGLADEDCDDLEPL) are disordered.

In terms of assembly, PP2A consists of a common heterodimeric core enzyme, composed of a 36 kDa catalytic subunit (subunit C) and a 65 kDa constant regulatory subunit (PR65 or subunit A), that associates with a variety of regulatory subunits. Proteins that associate with the core dimer include three families of regulatory subunits B (the R2/B/PR55/B55, R3/B''/PR72/PR130/PR59 and R5/B'/B56 families), the 48 kDa variable regulatory subunit, viral proteins, and cell signaling molecules. As to expression, expressed in testis, kidney, liver, lung, spleen, brain and heart.

The B regulatory subunit might modulate substrate selectivity and catalytic activity, and might also direct the localization of the catalytic enzyme to a particular subcellular compartment. Interacts with retinoblastoma-related protein p107 (in vivo). May target PP2A core dimer to p107 resulting in dephosphorylation of p107. This chain is Serine/threonine-protein phosphatase 2A regulatory subunit B'' subunit delta (Ppp2r3d), found in Mus musculus (Mouse).